An 836-amino-acid chain; its full sequence is Zinc fingers and homeoboxes protein 2 (836 aa).

The disordered stretch occupies residues 24 to 58; that stretch reads LEEADRAKDKGLGVPPSDVSKERWAAEPEPSSKES. Positions 27–77 are interaction with EFNB1; that stretch reads ADRAKDKGLGVPPSDVSKERWAAEPEPSSKESEVVEVRSVGESQSKKLQGG. Residues 42 to 58 show a composition bias toward basic and acidic residues; it reads VSKERWAAEPEPSSKES. 2 C2H2-type zinc fingers span residues 78 to 101 and 110 to 133; these read YECK…DMQH and YVCA…SKFH. A disordered region spans residues 168 to 210; sequence SAPGSSDNDPGVSVGKTATVKTGKQKADAKKVPKKPDEAAPDN. Basic and acidic residues predominate over residues 192 to 210; it reads QKADAKKVPKKPDEAAPDN. Residues 195-358 are required for homodimerization; it reads DAKKVPKKPD…PAQLTPTKVS (164 aa). 4 DNA-binding regions (homeobox) span residues 263–324, 439–501, 530–591, and 628–690; these read NTTK…WSPE, TPAS…IVHI, AQKF…EQAV, and SPSS…TLSW. The tract at residues 263-446 is required for repressor activity; the sequence is NTTKYNSALD…PLTPASDRKK (184 aa). A required for interaction with NFYA region spans residues 263 to 497; it reads NTTKYNSALD…SDHRYRCQRG (235 aa). The tract at residues 317 to 446 is required for nuclear localization; sequence HGISWSPEEV…PLTPASDRKK (130 aa). The disordered stretch occupies residues 404–442; that stretch reads GQKRPLVTPQAAPEPKRPHIAQVPEPPPKVANTPLTPAS. Lys455 is covalently cross-linked (Glycyl lysine isopeptide (Lys-Gly) (interchain with G-Cter in SUMO2)). Composition is skewed to basic and acidic residues over residues 700–709 and 730–746; these read SDDHGHDVAS and YAKD…EKLV. Residues 700-836 are disordered; it reads SDDHGHDVAS…DSTPAEAGQA (137 aa). Phosphoserine is present on residues Ser824 and Ser826.

The protein belongs to the ZHX family. In terms of assembly, homodimer (via homeobox domain 1). Heterodimer with ZHX1 (via homeobox domain 1). Heterodimer with ZHX3 (via homeobox domain 1). Heterodimerization with ZHX1 is not necessary for repressor activity. Interacts (via homeobox domain) with NFYA (via N-terminus). Interacts with EFNB1 intracellular domain peptide; the interaction enhances ZHX2 transcriptional repression activity.

It is found in the nucleus. Its function is as follows. Acts as a transcriptional repressor. Represses the promoter activity of the CDC25C gene stimulated by NFYA. May play a role in retinal development where it regulates the composition of bipolar cell populations, by promoting differentiation of bipolar OFF-type cells. In the brain, may promote maintenance and suppress differentiation of neural progenitor cells in the developing cortex. This Rattus norvegicus (Rat) protein is Zinc fingers and homeoboxes protein 2 (Zhx2).